Here is a 158-residue protein sequence, read N- to C-terminus: S-ribosylhomocysteine lyase (158 aa).

Histidine 55, histidine 59, and cysteine 127 together coordinate Fe cation.

This sequence belongs to the LuxS family. As to quaternary structure, homodimer. Fe cation is required as a cofactor.

The enzyme catalyses S-(5-deoxy-D-ribos-5-yl)-L-homocysteine = (S)-4,5-dihydroxypentane-2,3-dione + L-homocysteine. Its function is as follows. Involved in the synthesis of autoinducer 2 (AI-2) which is secreted by bacteria and is used to communicate both the cell density and the metabolic potential of the environment. The regulation of gene expression in response to changes in cell density is called quorum sensing. Catalyzes the transformation of S-ribosylhomocysteine (RHC) to homocysteine (HC) and 4,5-dihydroxy-2,3-pentadione (DPD). The protein is S-ribosylhomocysteine lyase of Geobacillus thermodenitrificans (strain NG80-2).